We begin with the raw amino-acid sequence, 444 residues long: tRNA-2-methylthio-N(6)-dimethylallyladenosine synthase (444 aa).

The MTTase N-terminal domain maps to 2–119; that stretch reads KKVYIKTFGC…LPDLIESRKQ (118 aa). [4Fe-4S] cluster is bound by residues Cys11, Cys48, Cys82, Cys156, Cys160, and Cys163. Residues 142 to 374 form the Radical SAM core domain; the sequence is KVDGGAAFVS…NEVIEAKGYA (233 aa). The 64-residue stretch at 377-440 folds into the TRAM domain; it reads QSMVGTVQRV…PHSLAGEALT (64 aa).

The protein belongs to the methylthiotransferase family. MiaB subfamily. In terms of assembly, monomer. It depends on [4Fe-4S] cluster as a cofactor.

The protein localises to the cytoplasm. The catalysed reaction is N(6)-dimethylallyladenosine(37) in tRNA + (sulfur carrier)-SH + AH2 + 2 S-adenosyl-L-methionine = 2-methylsulfanyl-N(6)-dimethylallyladenosine(37) in tRNA + (sulfur carrier)-H + 5'-deoxyadenosine + L-methionine + A + S-adenosyl-L-homocysteine + 2 H(+). Functionally, catalyzes the methylthiolation of N6-(dimethylallyl)adenosine (i(6)A), leading to the formation of 2-methylthio-N6-(dimethylallyl)adenosine (ms(2)i(6)A) at position 37 in tRNAs that read codons beginning with uridine. This is tRNA-2-methylthio-N(6)-dimethylallyladenosine synthase from Chromobacterium violaceum (strain ATCC 12472 / DSM 30191 / JCM 1249 / CCUG 213 / NBRC 12614 / NCIMB 9131 / NCTC 9757 / MK).